The primary structure comprises 385 residues: Probable splicing factor YJU2B (385 aa).

The segment at 1–26 is disordered; that stretch reads MGERKGQNKYYPPDFNPEKHGSLNRY. Residue serine 40 is modified to Phosphoserine. Residues 182–215 are a coiled coil; the sequence is LNSMLRRHFREKKKAMQEEEEKDQALQAKANLAI. A disordered region spans residues 256–385; it reads FPSAQGPSTS…VADYSDSESE (130 aa). Over residues 260–270 the composition is skewed to polar residues; sequence QGPSTSSSKAS. At serine 306 the chain carries Phosphoserine. 2 stretches are compositionally biased toward polar residues: residues 307–316 and 359–373; these read PQCTADNSLS and GSSQEDLLHPNTPNA.

The protein belongs to the CWC16 family.

The protein resides in the nucleus. In terms of biological role, may be involved in mRNA splicing. The polypeptide is Probable splicing factor YJU2B (Rattus norvegicus (Rat)).